The sequence spans 714 residues: Polyribonucleotide nucleotidyltransferase (714 aa).

Asp488 and Asp494 together coordinate Mg(2+). The KH domain maps to 555–614; sequence PRIEVMNIPTDKIRDVIGSGGKVIREIVEKTGAKINIEDDGTVKIASSNGKEIEAAKKWI. The S1 motif domain maps to 624 to 692; sequence GEIYEGTVVK…ERGKVRLSMK (69 aa).

This sequence belongs to the polyribonucleotide nucleotidyltransferase family. Mg(2+) is required as a cofactor.

The protein resides in the cytoplasm. It catalyses the reaction RNA(n+1) + phosphate = RNA(n) + a ribonucleoside 5'-diphosphate. Involved in mRNA degradation. Catalyzes the phosphorolysis of single-stranded polyribonucleotides processively in the 3'- to 5'-direction. In Brucella suis biovar 1 (strain 1330), this protein is Polyribonucleotide nucleotidyltransferase.